The sequence spans 124 residues: MAIAKEDILEAVSSMSVLELNELVKAFEEKFGVSAAAVAVAGPAGGGAAAAAEEQTEFTVNLTEVGANKVSVIKAVRELTGLGLKEAKDLVDGAPKPVKESVPKAAAEEAKKKLEEAGAKAEIK.

Residues 94–124 (APKPVKESVPKAAAEEAKKKLEEAGAKAEIK) form a disordered region.

It belongs to the bacterial ribosomal protein bL12 family. As to quaternary structure, homodimer. Part of the ribosomal stalk of the 50S ribosomal subunit. Forms a multimeric L10(L12)X complex, where L10 forms an elongated spine to which 2 to 4 L12 dimers bind in a sequential fashion. Binds GTP-bound translation factors.

Forms part of the ribosomal stalk which helps the ribosome interact with GTP-bound translation factors. Is thus essential for accurate translation. The protein is Large ribosomal subunit protein bL12 of Paraburkholderia phytofirmans (strain DSM 17436 / LMG 22146 / PsJN) (Burkholderia phytofirmans).